We begin with the raw amino-acid sequence, 500 residues long: Probable cytosol aminopeptidase (500 aa).

Residues Lys-265 and Asp-270 each contribute to the Mn(2+) site. Lys-277 is an active-site residue. Asp-288, Asp-347, and Glu-349 together coordinate Mn(2+). Arg-351 is an active-site residue.

It belongs to the peptidase M17 family. Requires Mn(2+) as cofactor.

The protein resides in the cytoplasm. It catalyses the reaction Release of an N-terminal amino acid, Xaa-|-Yaa-, in which Xaa is preferably Leu, but may be other amino acids including Pro although not Arg or Lys, and Yaa may be Pro. Amino acid amides and methyl esters are also readily hydrolyzed, but rates on arylamides are exceedingly low.. The catalysed reaction is Release of an N-terminal amino acid, preferentially leucine, but not glutamic or aspartic acids.. Its function is as follows. Presumably involved in the processing and regular turnover of intracellular proteins. Catalyzes the removal of unsubstituted N-terminal amino acids from various peptides. The polypeptide is Probable cytosol aminopeptidase (Rickettsia typhi (strain ATCC VR-144 / Wilmington)).